A 378-amino-acid polypeptide reads, in one-letter code: UDP-N-acetylglucosamine--N-acetylmuramyl-(pentapeptide) pyrophosphoryl-undecaprenol N-acetylglucosamine transferase (378 aa).

Residues 24-26 (TAG), asparagine 144, arginine 181, serine 215, and glutamine 310 contribute to the UDP-N-acetyl-alpha-D-glucosamine site.

This sequence belongs to the glycosyltransferase 28 family. MurG subfamily.

It is found in the cell membrane. The catalysed reaction is di-trans,octa-cis-undecaprenyl diphospho-N-acetyl-alpha-D-muramoyl-L-alanyl-D-glutamyl-meso-2,6-diaminopimeloyl-D-alanyl-D-alanine + UDP-N-acetyl-alpha-D-glucosamine = di-trans,octa-cis-undecaprenyl diphospho-[N-acetyl-alpha-D-glucosaminyl-(1-&gt;4)]-N-acetyl-alpha-D-muramoyl-L-alanyl-D-glutamyl-meso-2,6-diaminopimeloyl-D-alanyl-D-alanine + UDP + H(+). Its pathway is cell wall biogenesis; peptidoglycan biosynthesis. Its function is as follows. Cell wall formation. Catalyzes the transfer of a GlcNAc subunit on undecaprenyl-pyrophosphoryl-MurNAc-pentapeptide (lipid intermediate I) to form undecaprenyl-pyrophosphoryl-MurNAc-(pentapeptide)GlcNAc (lipid intermediate II). The protein is UDP-N-acetylglucosamine--N-acetylmuramyl-(pentapeptide) pyrophosphoryl-undecaprenol N-acetylglucosamine transferase of Nocardia farcinica (strain IFM 10152).